The primary structure comprises 161 residues: Transcriptional repressor NrdR (161 aa).

A zinc finger lies at 3-34; that stretch reads CPYCGARDARVIDSRELNGGESIRRRRECIAC. Positions 49-139 constitute an ATP-cone domain; that stretch reads LMVVKRDGRR…VYRRFADLED (91 aa).

This sequence belongs to the NrdR family. Zn(2+) is required as a cofactor.

In terms of biological role, negatively regulates transcription of bacterial ribonucleotide reductase nrd genes and operons by binding to NrdR-boxes. In Thermomicrobium roseum (strain ATCC 27502 / DSM 5159 / P-2), this protein is Transcriptional repressor NrdR.